A 155-amino-acid polypeptide reads, in one-letter code: Small ribosomal subunit protein bS6 (155 aa).

A disordered region spans residues 94-155 (EEHETEPSAM…RDDNSDGGQE (62 aa)). Over residues 107–149 (RGDRGDRGDRRGGDRFGDRDRGDRGDRGSSRFGDRERPRRDDN) the composition is skewed to basic and acidic residues.

Belongs to the bacterial ribosomal protein bS6 family.

In terms of biological role, binds together with bS18 to 16S ribosomal RNA. The protein is Small ribosomal subunit protein bS6 of Parvibaculum lavamentivorans (strain DS-1 / DSM 13023 / NCIMB 13966).